A 254-amino-acid polypeptide reads, in one-letter code: MLKIAEHEFNSRLFTGTGKFSSANLMLEAIQASQSQLVTMAMKRLDLSSGSDEILLPLQQSGIKLLPNTSGARNAKEAVFAAELAREVLNTNWVKLEIHPDPKYLMPDPIETLAAAKTLCDKGFVVLPYVHADPVLCRRLEEVGCAAVMPLASPIGSNQGLATETFLKIIIEQASVPVVVDAGIGTPSQATHAMELGADAVLVNTAIASSRDPIAMARCFSQAVETGRAAYRAGLGQVSVRAEHTSPLTGFLNE.

K95 serves as the catalytic Schiff-base intermediate with DXP. 1-deoxy-D-xylulose 5-phosphate is bound by residues G156, 182–183, and 204–205; these read AG and NT.

Belongs to the ThiG family. Homotetramer. Forms heterodimers with either ThiH or ThiS.

The protein resides in the cytoplasm. The catalysed reaction is [ThiS sulfur-carrier protein]-C-terminal-Gly-aminoethanethioate + 2-iminoacetate + 1-deoxy-D-xylulose 5-phosphate = [ThiS sulfur-carrier protein]-C-terminal Gly-Gly + 2-[(2R,5Z)-2-carboxy-4-methylthiazol-5(2H)-ylidene]ethyl phosphate + 2 H2O + H(+). Its pathway is cofactor biosynthesis; thiamine diphosphate biosynthesis. Its function is as follows. Catalyzes the rearrangement of 1-deoxy-D-xylulose 5-phosphate (DXP) to produce the thiazole phosphate moiety of thiamine. Sulfur is provided by the thiocarboxylate moiety of the carrier protein ThiS. In vitro, sulfur can be provided by H(2)S. This chain is Thiazole synthase, found in Shewanella sediminis (strain HAW-EB3).